The following is a 446-amino-acid chain: tRNA wybutosine-synthesizing protein 2 homolog (446 aa).

S-adenosyl-L-methionine contacts are provided by residues Ser-208, Lys-215, Glu-255, and 283–284 (DN).

Belongs to the class I-like SAM-binding methyltransferase superfamily. TRM5/TYW2 family.

The catalysed reaction is 4-demethylwyosine(37) in tRNA(Phe) + S-adenosyl-L-methionine = 4-demethyl-7-[(3S)-3-amino-3-carboxypropyl]wyosine(37) in tRNA(Phe) + S-methyl-5'-thioadenosine + H(+). It participates in tRNA modification; wybutosine-tRNA(Phe) biosynthesis. S-adenosyl-L-methionine-dependent transferase that acts as a component of the wybutosine biosynthesis pathway. Wybutosine is a hyper modified guanosine with a tricyclic base found at the 3'-position adjacent to the anticodon of eukaryotic phenylalanine tRNA. Catalyzes the transfer of the alpha-amino-alpha-carboxypropyl (acp) group from S-adenosyl-L-methionine to the C-7 position of 4-demethylwyosine (imG-14) to produce wybutosine-86. The sequence is that of tRNA wybutosine-synthesizing protein 2 homolog (Trmt12) from Mus musculus (Mouse).